Here is a 305-residue protein sequence, read N- to C-terminus: Sulfate adenylyltransferase subunit 2 (305 aa).

The segment at 283–305 (RQGRVIDHDQSASMEKKKQEGYF) is disordered.

It belongs to the PAPS reductase family. CysD subfamily. In terms of assembly, heterodimer composed of CysD, the smaller subunit, and CysN.

It catalyses the reaction sulfate + ATP + H(+) = adenosine 5'-phosphosulfate + diphosphate. It participates in sulfur metabolism; hydrogen sulfide biosynthesis; sulfite from sulfate: step 1/3. In terms of biological role, with CysN forms the ATP sulfurylase (ATPS) that catalyzes the adenylation of sulfate producing adenosine 5'-phosphosulfate (APS) and diphosphate, the first enzymatic step in sulfur assimilation pathway. APS synthesis involves the formation of a high-energy phosphoric-sulfuric acid anhydride bond driven by GTP hydrolysis by CysN coupled to ATP hydrolysis by CysD. The sequence is that of Sulfate adenylyltransferase subunit 2 from Caulobacter sp. (strain K31).